The sequence spans 108 residues: Structural protein 1 (108 aa).

The segment at 1–20 is disordered; it reads MSRVSEYGVPEGVRESDSDT. Residues 1–77 lie on the Intravirion side of the membrane; it reads MSRVSEYGVP…LKMQMDRLCN (77 aa). Residues 78 to 98 form a helical; Signal-anchor for type II membrane protein membrane-spanning segment; that stretch reads VLGVVLQMATLALVTYIAFVV. At 99-108 the chain is on the virion surface side; sequence HTRATSCKRE.

This sequence belongs to the varicellovirus ORF1 protein family. In terms of assembly, homodimer. Post-translationally, phosphorylated.

It localises to the virion membrane. The protein resides in the host Golgi apparatus membrane. The protein is Structural protein 1 of Varicella-zoster virus (strain Dumas) (HHV-3).